Here is a 546-residue protein sequence, read N- to C-terminus: Protein phosphatase 1G (546 aa).

G2 carries the N-myristoyl glycine lipid modification. R22 is subject to Omega-N-methylarginine. A PPM-type phosphatase domain is found at P26–F505. Mn(2+)-binding residues include D60 and G61. Disordered stretches follow at residues Q116 to N139 and G161 to G328. T122 carries the post-translational modification Phosphothreonine. Residues E123 to N139 show a composition bias toward acidic residues. At S183 the chain carries Phosphoserine. A compositionally biased stretch (acidic residues) spans D259–M312. K383 carries the post-translational modification N6-acetyllysine. Mn(2+) contacts are provided by D441 and D496. Residues E512 to D546 are disordered. S527 carries the phosphoserine modification.

This sequence belongs to the PP2C family. In terms of assembly, interacts with NOL3; may dephosphorylate NOL3. Mg(2+) serves as cofactor. Requires Mn(2+) as cofactor. In terms of tissue distribution, widely expressed. Most abundant in testis, skeletal muscle, and heart.

The protein localises to the cytoplasm. The protein resides in the membrane. It carries out the reaction O-phospho-L-seryl-[protein] + H2O = L-seryl-[protein] + phosphate. The enzyme catalyses O-phospho-L-threonyl-[protein] + H2O = L-threonyl-[protein] + phosphate. This chain is Protein phosphatase 1G (PPM1G), found in Homo sapiens (Human).